A 378-amino-acid chain; its full sequence is O-methyltransferase dpfgI (378 aa).

S-adenosyl-L-methionine is bound by residues Gly232–Gly233, Asp257, Asn279–Phe280, and Arg295. The active-site Proton acceptor is the His299.

The protein belongs to the class I-like SAM-binding methyltransferase superfamily. Cation-independent O-methyltransferase family.

It functions in the pathway secondary metabolite biosynthesis; terpenoid biosynthesis. In terms of biological role, O-methyltransferase; part of the gene cluster that mediates the biosynthesis of diterpenoid pyrones. The first step of the pathway is the synthesis of the alpha-pyrone moiety by the polyketide synthase dpfgA via condensation of one acetyl-CoA starter unit with 3 malonyl-CoA units and 2 methylations. The alpha-pyrone is then combined with geranylgeranyl pyrophosphate (GGPP) formed by the GGPP synthase dpfgD through the action of the prenyltransferase dpfgC to yield a linear alpha-pyrone diterpenoid. Subsequent steps in the diterpenoid pyrone biosynthetic pathway involve the decalin core formation, which is initiated by the epoxidation of the C10-C11 olefin by the FAD-dependent oxidoreductase dpfgE, and is followed by a cyclization cascade catalyzed by the terpene cyclase dpfgB. The short chain dehydrogenase/reductase dpfgG then oxidizes the 8S hydroxy group to a ketone and the short chain dehydrogenase/reductase dpfgH reduces the ketone to the 8R hydroxy group to yield higginsianin B. Higginsianin B is further methylated by the methyltransferase dpfgI to produce the intermediate named FDDP B. The cytochrome P450 monooxygenase dfgpJ then catalyzes a three-step oxidation at C-27 to generate a carboxylic acid as well as C-26 hydroxylation. Finally, methyltransferase dpfgK methylates the carboxylic acid generated by dpfgJ, yielding the final diterpenoid pyrones from the pathway which were named FDDP D and FDDP E. This chain is O-methyltransferase dpfgI, found in Gibberella zeae (strain ATCC MYA-4620 / CBS 123657 / FGSC 9075 / NRRL 31084 / PH-1) (Wheat head blight fungus).